An 87-amino-acid polypeptide reads, in one-letter code: uncharacterized protein (87 aa).

Residues 63-83 (IVLALVLGVFSLVGLIFIIYF) traverse the membrane as a helical segment.

It is found in the membrane. This is an uncharacterized protein from Dictyostelium discoideum (Social amoeba).